The sequence spans 555 residues: CTP synthase (555 aa).

The interval 1–267 (MAKYIFVTGG…GNYLTLRLGL (267 aa)) is amidoligase domain. CTP is bound at residue S13. Residue S13 coordinates UTP. 14 to 19 (SVGKGI) contacts ATP. An L-glutamine-binding site is contributed by Y54. An ATP-binding site is contributed by D71. D71 and E141 together coordinate Mg(2+). Residues 148–150 (DIE), 188–193 (KTKPTQ), and K224 contribute to the CTP site. Residues 188-193 (KTKPTQ) and K224 contribute to the UTP site. Residues 292-535 (AIALVGKYVE…IAAAAQTFRE (244 aa)) form the Glutamine amidotransferase type-1 domain. Residue G354 participates in L-glutamine binding. C381 functions as the Nucleophile; for glutamine hydrolysis in the catalytic mechanism. L-glutamine-binding positions include 382–385 (LGMQ), E406, and R463. Active-site residues include H508 and E510.

It belongs to the CTP synthase family. As to quaternary structure, homotetramer.

It carries out the reaction UTP + L-glutamine + ATP + H2O = CTP + L-glutamate + ADP + phosphate + 2 H(+). The catalysed reaction is L-glutamine + H2O = L-glutamate + NH4(+). It catalyses the reaction UTP + NH4(+) + ATP = CTP + ADP + phosphate + 2 H(+). It functions in the pathway pyrimidine metabolism; CTP biosynthesis via de novo pathway; CTP from UDP: step 2/2. Its activity is regulated as follows. Allosterically activated by GTP, when glutamine is the substrate; GTP has no effect on the reaction when ammonia is the substrate. The allosteric effector GTP functions by stabilizing the protein conformation that binds the tetrahedral intermediate(s) formed during glutamine hydrolysis. Inhibited by the product CTP, via allosteric rather than competitive inhibition. Catalyzes the ATP-dependent amination of UTP to CTP with either L-glutamine or ammonia as the source of nitrogen. Regulates intracellular CTP levels through interactions with the four ribonucleotide triphosphates. The polypeptide is CTP synthase (Roseiflexus castenholzii (strain DSM 13941 / HLO8)).